Reading from the N-terminus, the 264-residue chain is Undecaprenyl-diphosphatase (264 aa).

8 helical membrane passes run Ile-7–Leu-27, Leu-41–Ala-61, Val-89–Val-109, Ile-114–Phe-134, Thr-144–Gly-164, Ile-186–Ile-206, Leu-219–Ile-239, and Met-244–Leu-264.

It belongs to the UppP family.

It localises to the cell inner membrane. It catalyses the reaction di-trans,octa-cis-undecaprenyl diphosphate + H2O = di-trans,octa-cis-undecaprenyl phosphate + phosphate + H(+). In terms of biological role, catalyzes the dephosphorylation of undecaprenyl diphosphate (UPP). Confers resistance to bacitracin. In Vesicomyosocius okutanii subsp. Calyptogena okutanii (strain HA), this protein is Undecaprenyl-diphosphatase.